A 124-amino-acid chain; its full sequence is Glutaredoxin-2 (124 aa).

An intrachain disulfide couples cysteine 13 to cysteine 16.

This sequence belongs to the glutaredoxin family. In terms of assembly, homodimer.

The protein localises to the host cytoplasm. Its function is as follows. Glutaredoxin necessary for virion morphogenesis and virus replication. Functions as a thiol-disulfide transfer protein between membrane-associated OPG128 and substrates OPG095 or OPG053. The complete pathway for formation of disulfide bonds in intracellular virion membrane proteins sequentially involves oxidation of OPG072, OPG128 and OPG088. Exhibit thioltransferase and dehydroascorbate reductase activities in vitro. This chain is Glutaredoxin-2 (OPG088), found in Bos taurus (Bovine).